The chain runs to 937 residues: C-1-tetrahydrofolate synthase, cytoplasmic (937 aa).

Residues 1 to 309 (MALLLEGTSL…TLLPLKLQTP (309 aa)) form a methylenetetrahydrofolate dehydrogenase and cyclohydrolase region. Substrate contacts are provided by residues 50–54 (YVRMK) and 97–99 (VQL). NADP(+)-binding positions include 168–170 (GRS) and Ser-193. A substrate-binding site is contributed by 268–272 (PGSVG). The segment at 310-937 (VPSDIEIARS…AENGDIVGLS (628 aa)) is formyltetrahydrofolate synthetase. Residue 374-381 (TPFGEGKS) coordinates ATP.

The protein in the N-terminal section; belongs to the tetrahydrofolate dehydrogenase/cyclohydrolase family. This sequence in the C-terminal section; belongs to the formate--tetrahydrofolate ligase family. As to quaternary structure, homodimer.

The protein localises to the cytoplasm. The catalysed reaction is (6R)-5,10-methylene-5,6,7,8-tetrahydrofolate + NADP(+) = (6R)-5,10-methenyltetrahydrofolate + NADPH. It catalyses the reaction (6R)-5,10-methenyltetrahydrofolate + H2O = (6R)-10-formyltetrahydrofolate + H(+). It carries out the reaction (6S)-5,6,7,8-tetrahydrofolate + formate + ATP = (6R)-10-formyltetrahydrofolate + ADP + phosphate. Its pathway is one-carbon metabolism; tetrahydrofolate interconversion. The protein is C-1-tetrahydrofolate synthase, cytoplasmic of Schizosaccharomyces pombe (strain 972 / ATCC 24843) (Fission yeast).